The chain runs to 142 residues: Large ribosomal subunit protein uL11 (142 aa).

This sequence belongs to the universal ribosomal protein uL11 family. Part of the ribosomal stalk of the 50S ribosomal subunit. Interacts with L10 and the large rRNA to form the base of the stalk. L10 forms an elongated spine to which L12 dimers bind in a sequential fashion forming a multimeric L10(L12)X complex. In terms of processing, one or more lysine residues are methylated.

In terms of biological role, forms part of the ribosomal stalk which helps the ribosome interact with GTP-bound translation factors. This chain is Large ribosomal subunit protein uL11, found in Xanthomonas campestris pv. campestris (strain B100).